A 76-amino-acid chain; its full sequence is ATP synthase subunit 9, mitochondrial (76 aa).

2 helical membrane passes run 14–34 (ISTIGLIGAGIGIGIVFAALI) and 56–76 (ALSEATGLFCLMISFMLLFAV).

It belongs to the ATPase C chain family. F-type ATPases have 2 components, CF(1) - the catalytic core - and CF(0) - the membrane proton channel. CF(1) has five subunits: alpha(3), beta(3), gamma(1), delta(1), epsilon(1). CF(0) has three main subunits: a, b and c.

The protein localises to the mitochondrion membrane. Functionally, mitochondrial membrane ATP synthase (F(1)F(0) ATP synthase or Complex V) produces ATP from ADP in the presence of a proton gradient across the membrane which is generated by electron transport complexes of the respiratory chain. F-type ATPases consist of two structural domains, F(1) - containing the extramembraneous catalytic core and F(0) - containing the membrane proton channel, linked together by a central stalk and a peripheral stalk. During catalysis, ATP synthesis in the catalytic domain of F(1) is coupled via a rotary mechanism of the central stalk subunits to proton translocation. Part of the complex F(0) domain. A homomeric c-ring of probably 10 subunits is part of the complex rotary element. The protein is ATP synthase subunit 9, mitochondrial (ATP9) of Candida glabrata (strain ATCC 2001 / BCRC 20586 / JCM 3761 / NBRC 0622 / NRRL Y-65 / CBS 138) (Yeast).